The chain runs to 374 residues: Alanine racemase (374 aa).

Lys-40 functions as the Proton acceptor; specific for D-alanine in the catalytic mechanism. N6-(pyridoxal phosphate)lysine is present on Lys-40. Arg-136 lines the substrate pocket. Tyr-264 serves as the catalytic Proton acceptor; specific for L-alanine. Met-311 lines the substrate pocket.

It belongs to the alanine racemase family. The cofactor is pyridoxal 5'-phosphate.

The enzyme catalyses L-alanine = D-alanine. It participates in amino-acid biosynthesis; D-alanine biosynthesis; D-alanine from L-alanine: step 1/1. Catalyzes the interconversion of L-alanine and D-alanine. May also act on other amino acids. The protein is Alanine racemase (alr) of Pediococcus pentosaceus (strain ATCC 25745 / CCUG 21536 / LMG 10740 / 183-1w).